A 91-amino-acid polypeptide reads, in one-letter code: Probable Fe(2+)-trafficking protein (91 aa).

This sequence belongs to the Fe(2+)-trafficking protein family.

In terms of biological role, could be a mediator in iron transactions between iron acquisition and iron-requiring processes, such as synthesis and/or repair of Fe-S clusters in biosynthetic enzymes. This chain is Probable Fe(2+)-trafficking protein, found in Cellvibrio japonicus (strain Ueda107) (Pseudomonas fluorescens subsp. cellulosa).